A 122-amino-acid polypeptide reads, in one-letter code: MARIVGVEIPNDKKVEIALTYIYGIGRTRAKQICEATNIDPDKRVRELNDEEISKIATYIQQNFKVEGELRTEVMQNIKRLIDIGCYRGFRHKLGLPVRGQKTKSNARTRKGPRPSRIKKKK.

Residues valine 98–lysine 122 are disordered. Basic residues predominate over residues glutamine 101 to lysine 122.

This sequence belongs to the universal ribosomal protein uS13 family. As to quaternary structure, part of the 30S ribosomal subunit. Forms a loose heterodimer with protein S19. Forms two bridges to the 50S subunit in the 70S ribosome.

In terms of biological role, located at the top of the head of the 30S subunit, it contacts several helices of the 16S rRNA. In the 70S ribosome it contacts the 23S rRNA (bridge B1a) and protein L5 of the 50S subunit (bridge B1b), connecting the 2 subunits; these bridges are implicated in subunit movement. Contacts the tRNAs in the A and P-sites. The sequence is that of Small ribosomal subunit protein uS13 from Thermosipho africanus (strain TCF52B).